Reading from the N-terminus, the 684-residue chain is RNA helicase NPH-II (684 aa).

Positions 184 to 359 (FRAWAARRPT…EFFPDAEFVH (176 aa)) constitute a Helicase ATP-binding domain. Residue 197-204 (GGTGVGKT) coordinates ATP. The DEXH box motif lies at 308 to 311 (DEVH). The region spanning 392 to 563 (NVSAALSAHR…DLYVQPSDLE (172 aa)) is the Helicase C-terminal domain.

Belongs to the DEAD box helicase family. DEAH subfamily. In terms of assembly, monomer.

It localises to the virion. The catalysed reaction is ATP + H2O = ADP + phosphate + H(+). Functionally, NTP-dependent helicase that catalyzes unidirectional unwinding of 3'tailed duplex RNAs and plays an important role during transcription of early mRNAs, presumably by preventing R-loop formation behind the elongating RNA polymerase. Might also play a role in the export of newly synthesized mRNA chains out of the core into the cytoplasm. Required for replication and propagation of viral particles. The protein is RNA helicase NPH-II (NPH2) of Homo sapiens (Human).